The following is a 66-amino-acid chain: Large ribosomal subunit protein bL31 (66 aa).

Positions 16, 18, 36, and 39 each coordinate Zn(2+).

It belongs to the bacterial ribosomal protein bL31 family. Type A subfamily. In terms of assembly, part of the 50S ribosomal subunit. Zn(2+) is required as a cofactor.

Binds the 23S rRNA. This chain is Large ribosomal subunit protein bL31, found in Campylobacter curvus (strain 525.92).